We begin with the raw amino-acid sequence, 874 residues long: Alanine--tRNA ligase (874 aa).

Positions 562, 566, 663, and 667 each coordinate Zn(2+).

It belongs to the class-II aminoacyl-tRNA synthetase family. Zn(2+) is required as a cofactor.

The protein localises to the cytoplasm. It catalyses the reaction tRNA(Ala) + L-alanine + ATP = L-alanyl-tRNA(Ala) + AMP + diphosphate. In terms of biological role, catalyzes the attachment of alanine to tRNA(Ala) in a two-step reaction: alanine is first activated by ATP to form Ala-AMP and then transferred to the acceptor end of tRNA(Ala). Also edits incorrectly charged Ser-tRNA(Ala) and Gly-tRNA(Ala) via its editing domain. This Bordetella parapertussis (strain 12822 / ATCC BAA-587 / NCTC 13253) protein is Alanine--tRNA ligase.